We begin with the raw amino-acid sequence, 162 residues long: N5-carboxyaminoimidazole ribonucleotide mutase (162 aa).

Positions 11, 14, and 41 each coordinate substrate.

Belongs to the AIR carboxylase family. Class I subfamily.

It catalyses the reaction 5-carboxyamino-1-(5-phospho-D-ribosyl)imidazole + H(+) = 5-amino-1-(5-phospho-D-ribosyl)imidazole-4-carboxylate. It functions in the pathway purine metabolism; IMP biosynthesis via de novo pathway; 5-amino-1-(5-phospho-D-ribosyl)imidazole-4-carboxylate from 5-amino-1-(5-phospho-D-ribosyl)imidazole (N5-CAIR route): step 2/2. In terms of biological role, catalyzes the conversion of N5-carboxyaminoimidazole ribonucleotide (N5-CAIR) to 4-carboxy-5-aminoimidazole ribonucleotide (CAIR). The polypeptide is N5-carboxyaminoimidazole ribonucleotide mutase (Brucella melitensis biotype 1 (strain ATCC 23456 / CCUG 17765 / NCTC 10094 / 16M)).